A 334-amino-acid polypeptide reads, in one-letter code: MLNTLVVGASGYTGAELAAYLHRHPHMNLIRLMVSAQSVDADKCFSDLHPQYKGIVDLPLQPLTDIINAAKGIDVVFLATAHEVSHDIAPLFLAAGCTVFDLSGAYRVQNAQIYQQYYGFKHKHTEWLAQAVYGLAEWQAENIKQAQLVAVPGCYPTVSQLCLKPLLENSLLDISYWPVINATSGVSGAGRKASMTNSFCEISLQPYGIFTHRHQPEIEEHLGTRVVFTPHLGNFARGILATITCKLKPGVTAEQIDEVYRQAYKDKPLVRLYSKGVPALKSVVGLPFCDIGFVVQGDHLIVVGTEDNLLKGAAAQAVQCMNIRFGFEETQALL.

Cysteine 154 is a catalytic residue.

Belongs to the NAGSA dehydrogenase family. Type 1 subfamily.

It localises to the cytoplasm. The enzyme catalyses N-acetyl-L-glutamate 5-semialdehyde + phosphate + NADP(+) = N-acetyl-L-glutamyl 5-phosphate + NADPH + H(+). It functions in the pathway amino-acid biosynthesis; L-arginine biosynthesis; N(2)-acetyl-L-ornithine from L-glutamate: step 3/4. Catalyzes the NADPH-dependent reduction of N-acetyl-5-glutamyl phosphate to yield N-acetyl-L-glutamate 5-semialdehyde. In Photorhabdus laumondii subsp. laumondii (strain DSM 15139 / CIP 105565 / TT01) (Photorhabdus luminescens subsp. laumondii), this protein is N-acetyl-gamma-glutamyl-phosphate reductase.